A 53-amino-acid polypeptide reads, in one-letter code: UPF0391 membrane protein Bxeno_A2958 (53 aa).

Helical transmembrane passes span 5 to 25 (AIVFFVIAIIAAVFGFTGIAA) and 30 to 50 (IAKILFYIFLVVFVVTLLLGV).

The protein belongs to the UPF0391 family.

The protein localises to the cell membrane. This Paraburkholderia xenovorans (strain LB400) protein is UPF0391 membrane protein Bxeno_A2958.